The chain runs to 270 residues: Probable 6-oxopurine nucleoside phosphorylase (270 aa).

Residues Ser10 and 48 to 49 (RH) contribute to the phosphate site. Substrate is bound at residue Met191. Position 192 (Thr192) interacts with phosphate. 215–217 (NYA) contributes to the substrate binding site.

This sequence belongs to the PNP/MTAP phosphorylase family. MTAP subfamily. Homohexamer. Dimer of a homotrimer.

It catalyses the reaction a purine D-ribonucleoside + phosphate = a purine nucleobase + alpha-D-ribose 1-phosphate. It functions in the pathway purine metabolism; purine nucleoside salvage. Purine nucleoside phosphorylase which is highly specific for 6-oxopurine nucleosides. Cleaves guanosine or inosine to respective bases and sugar-1-phosphate molecules. Involved in purine salvage. This Korarchaeum cryptofilum (strain OPF8) protein is Probable 6-oxopurine nucleoside phosphorylase.